The primary structure comprises 525 residues: Ribosomal protein S6 kinase beta-1 (525 aa).

Residues 28 to 32 (FDIDL) carry the TOS motif motif. The segment covering 32–46 (LDQPEDAGSEDELEE) has biased composition (acidic residues). Residues 32 to 54 (LDQPEDAGSEDELEEGGQLNESM) are disordered. The Protein kinase domain occupies 91–352 (FELLRVLGKG…AGEVQAHPFF (262 aa)). Residues 97-105 (LGKGGYGKV) and Lys-123 each bind ATP. Asp-218 serves as the catalytic Proton acceptor. At Thr-252 the chain carries Phosphothreonine; by PDPK1. In terms of domain architecture, AGC-kinase C-terminal spans 353–423 (RHINWEELLA…VAPSVLESVK (71 aa)). A disordered region spans residues 380 to 399 (SQFDSKFTRQTPVDSPDDST). Polar residues predominate over residues 381–399 (QFDSKFTRQTPVDSPDDST). Ser-394 is modified (phosphoserine). Thr-412 carries the post-translational modification Phosphothreonine; by MTOR, NEK6 and NEK7. Positions 424–525 (EKFSFEPKIR…KRPEHLRMNL (102 aa)) are autoinhibitory domain. Phosphoserine is present on residues Ser-434 and Ser-441. Thr-444 is subject to Phosphothreonine. A phosphoserine mark is found at Ser-447 and Ser-452. Lys-516 is modified (N6-acetyllysine).

The protein belongs to the protein kinase superfamily. AGC Ser/Thr protein kinase family. S6 kinase subfamily. As to quaternary structure, interacts with PPP1R9A/neurabin-1. Interacts with RPTOR. Interacts with IRS1. Interacts with EIF3B and EIF3C. Interacts with TRAF4. Interacts with POLDIP3. Interacts (via N-terminus) with IER5. Phosphorylation at Thr-412 is regulated by mTORC1. The phosphorylation at this site is maintained by an agonist-dependent autophosphorylation mechanism. Activated by phosphorylation at Thr-252 by PDPK1. Dephosphorylation by PPP1CC at Thr-412 in mitochondrion.

The protein localises to the cytoplasm. Its subcellular location is the synapse. The protein resides in the synaptosome. It localises to the mitochondrion outer membrane. It is found in the mitochondrion. The catalysed reaction is L-seryl-[protein] + ATP = O-phospho-L-seryl-[protein] + ADP + H(+). The enzyme catalyses L-threonyl-[protein] + ATP = O-phospho-L-threonyl-[protein] + ADP + H(+). With respect to regulation, activation requires multiple phosphorylation events on serine/threonine residues. Activation appears to be first mediated by phosphorylation of multiple sites in the autoinhibitory domain, which facilitates phosphorylation at Thr-412, disrupting the autoinhibitory mechanism and allowing phosphorylation of Thr-252 by PDPK1. The active conformation of the kinase is believed to be stabilized by a mechanism involving three conserved phosphorylation sites located in the kinase domain activation loop (Thr-252) and in the AGC-kinase C-terminal domain (Ser-394 in the middle of the tail/linker region and Thr-412 within a hydrophobic motif at its end). Activated by mTORC1; isoform Alpha I and isoform Alpha II are sensitive to rapamycin, which inhibits activating phosphorylation at Thr-412. Activated by PDPK1. Serine/threonine-protein kinase that acts downstream of mTOR signaling in response to growth factors and nutrients to promote cell proliferation, cell growth and cell cycle progression. Regulates protein synthesis through phosphorylation of EIF4B, RPS6 and EEF2K, and contributes to cell survival by repressing the pro-apoptotic function of BAD. Under conditions of nutrient depletion, the inactive form associates with the EIF3 translation initiation complex. Upon mitogenic stimulation, phosphorylation by the mechanistic target of rapamycin complex 1 (mTORC1) leads to dissociation from the EIF3 complex and activation. The active form then phosphorylates and activates several substrates in the pre-initiation complex, including the EIF2B complex and the cap-binding complex component EIF4B. Also controls translation initiation by phosphorylating a negative regulator of EIF4A, PDCD4, targeting it for ubiquitination and subsequent proteolysis. Promotes initiation of the pioneer round of protein synthesis by phosphorylating POLDIP3/SKAR. In response to IGF1, activates translation elongation by phosphorylating EEF2 kinase (EEF2K), which leads to its inhibition and thus activation of EEF2. Also plays a role in feedback regulation of mTORC2 by mTORC1 by phosphorylating MAPKAP1/SIN1, MTOR and RICTOR, resulting in the inhibition of mTORC2 and AKT1 signaling. Also involved in feedback regulation of mTORC1 and mTORC2 by phosphorylating DEPTOR. Mediates cell survival by phosphorylating the pro-apoptotic protein BAD and suppressing its pro-apoptotic function. Phosphorylates mitochondrial URI1 leading to dissociation of a URI1-PPP1CC complex. The free mitochondrial PPP1CC can then dephosphorylate RPS6KB1 at Thr-412, which is proposed to be a negative feedback mechanism for the RPS6KB1 anti-apoptotic function. Mediates TNF-alpha-induced insulin resistance by phosphorylating IRS1 at multiple serine residues, resulting in accelerated degradation of IRS1. In cells lacking functional TSC1-2 complex, constitutively phosphorylates and inhibits GSK3B. May be involved in cytoskeletal rearrangement through binding to neurabin. Phosphorylates and activates the pyrimidine biosynthesis enzyme CAD, downstream of MTOR. Following activation by mTORC1, phosphorylates EPRS and thereby plays a key role in fatty acid uptake by adipocytes and also most probably in interferon-gamma-induced translation inhibition. This is Ribosomal protein S6 kinase beta-1 (Rps6kb1) from Mus musculus (Mouse).